A 395-amino-acid chain; its full sequence is ATP-dependent RNA helicase eIF4A (395 aa).

The Q motif signature appears at 22–50 (TSFDDLGLKDELLRGIYGYGFENPSSIQQ). The 171-residue stretch at 53-223 (ILPVIKGNDV…GKFMRDPVRI (171 aa)) folds into the Helicase ATP-binding domain. Residue 66–73 (AQSGTGKT) coordinates ATP. The DEAD box motif lies at 171–174 (DEAD). The 162-residue stretch at 234-395 (GIKQFYIDVE…EMPTNIADLI (162 aa)) folds into the Helicase C-terminal domain.

This sequence belongs to the DEAD box helicase family. eIF4A subfamily. Component of the eIF4F complex, which composition varies with external and internal environmental conditions. It is composed of at least eIF4A, eIF4E and eIF4G.

It is found in the cytoplasm. The catalysed reaction is ATP + H2O = ADP + phosphate + H(+). ATP-dependent RNA helicase which is a subunit of the eIF4F complex involved in cap recognition and is required for mRNA binding to ribosome. In the current model of translation initiation, eIF4A unwinds RNA secondary structures in the 5'-UTR of mRNAs which is necessary to allow efficient binding of the small ribosomal subunit, and subsequent scanning for the initiator codon. The protein is ATP-dependent RNA helicase eIF4A (TIF1) of Yarrowia lipolytica (strain CLIB 122 / E 150) (Yeast).